The following is a 685-amino-acid chain: MSGLLAAAYSQVYALAVELSVCTRLDPRSLDVAAVVRNAGLLAELEAILLPRLRRQNDRACSALSLELVHLLENSREASAALLAPGRKGTRVPPLRTPSVAYSVEFYGGHKVDVSLCLINDIEILMKRINSVFYCMSHTMGLESLERALDLLGRFRGVSPIPDPRLYITSVPCWRCVGELMVLPNHGNPSTAEGTHVSCNHLAVPVNPEPVSGLFENEVRQAGLGHLLEAEEKARPGGPEEGAVPGPGRPEAEGATRALDTYNVFSTVPPEVAELSELLYWNSGGHAIGATGQGEGGGHSRLSALFARERRLALVRGACEEALAGARLTHLFDAVAPGATERLFCGGVYSSSGDAVEALKADCAAAFTAHPQYRAILQKRNELYTRLNRAMQRLGRGEEEASRESPEVPRPAGAREPGPSGALSDALKRKEQYLRQVATEGLAKLQSCLAQQSETLTETLCLRVWGDVVYWELARMRNHFLYRRAFVSGPWEDRRAGEGAAFENSKYIKTHLFTQTLSSEHLHALTHSLYTFITGPLAEESGLFPPPSNVALARCCDAAGTLPHQKAFLTSLIWPGIEPSDWIETSFNSFYSVPGGSLASSQQILCRALREAVLTVSLYNKTWGRSLILRRADAVSPGQALPPDGLYLTYDSDRPLILLYKGRGWVFKDLYALLYLHLQMRDDSA.

A C3H1-type zinc finger spans residues 173 to 201 (CWRCVGELMVLPNHGNPSTAEGTHVSCNH). Disordered stretches follow at residues 231–254 (EEKARPGGPEEGAVPGPGRPEAEG) and 394–423 (LGRGEEEASRESPEVPRPAGAREPGPSGAL). The segment covering 395 to 407 (GRGEEEASRESPE) has biased composition (basic and acidic residues). 619–626 (YNKTWGRS) contacts ATP.

The protein belongs to the herpesviridae TRM1 protein family. Associates with TRM2 and TRM3 to form the tripartite terminase complex. Interacts with portal protein.

Its subcellular location is the host nucleus. Component of the molecular motor that translocates viral genomic DNA in empty capsid during DNA packaging. Forms a tripartite terminase complex together with TRM2 and TRM3 in the host cytoplasm. Once the complex reaches the host nucleus, it interacts with the capsid portal vertex. This portal forms a ring in which genomic DNA is translocated into the capsid. TRM1 carries an endonuclease activity that plays an important role for the cleavage of concatemeric viral DNA into unit length genomes. The polypeptide is Tripartite terminase subunit 1 (Epstein-Barr virus (strain B95-8) (HHV-4)).